We begin with the raw amino-acid sequence, 469 residues long: Protein YfjI (469 aa).

In Escherichia coli (strain K12), this protein is Protein YfjI (yfjI).